Consider the following 1211-residue polypeptide: DNA-directed RNA polymerase subunit beta' (1211 aa).

The Zn(2+) site is built by cysteine 60, cysteine 62, cysteine 75, and cysteine 78. The Mg(2+) site is built by aspartate 450, aspartate 452, and aspartate 454. Positions 819, 893, 900, and 903 each coordinate Zn(2+).

This sequence belongs to the RNA polymerase beta' chain family. In terms of assembly, the RNAP catalytic core consists of 2 alpha, 1 beta, 1 beta' and 1 omega subunit. When a sigma factor is associated with the core the holoenzyme is formed, which can initiate transcription. The cofactor is Mg(2+). Zn(2+) is required as a cofactor.

The enzyme catalyses RNA(n) + a ribonucleoside 5'-triphosphate = RNA(n+1) + diphosphate. DNA-dependent RNA polymerase catalyzes the transcription of DNA into RNA using the four ribonucleoside triphosphates as substrates. In Streptococcus equi subsp. zooepidemicus (strain H70), this protein is DNA-directed RNA polymerase subunit beta'.